Consider the following 196-residue polypeptide: Glycerol-3-phosphate acyltransferase (196 aa).

The next 5 membrane-spanning stretches (helical) occupy residues 1–21, 53–73, 78–98, 112–132, and 152–172; these read MIIL…GYLT, AITA…GSLL, GALV…FLKF, IMTS…VMLI, and LLFG…VMIF.

It belongs to the PlsY family. In terms of assembly, probably interacts with PlsX.

The protein localises to the cell membrane. It catalyses the reaction an acyl phosphate + sn-glycerol 3-phosphate = a 1-acyl-sn-glycero-3-phosphate + phosphate. It functions in the pathway lipid metabolism; phospholipid metabolism. Catalyzes the transfer of an acyl group from acyl-phosphate (acyl-PO(4)) to glycerol-3-phosphate (G3P) to form lysophosphatidic acid (LPA). This enzyme utilizes acyl-phosphate as fatty acyl donor, but not acyl-CoA or acyl-ACP. The chain is Glycerol-3-phosphate acyltransferase from Carboxydothermus hydrogenoformans (strain ATCC BAA-161 / DSM 6008 / Z-2901).